A 320-amino-acid polypeptide reads, in one-letter code: Transcription factor MYB80 (320 aa).

2 HTH myb-type domains span residues 9-65 (KENV…RPDL) and 66-116 (KHGQ…KKKL). DNA-binding regions (H-T-H motif) lie at residues 37-61 (WRLI…TNYL) and 89-112 (WSLI…NTKL). The interval 257 to 283 (TAAAEEEERRKLKGEVVDQEEIGSEGG) is disordered. Basic and acidic residues predominate over residues 263–272 (EERRKLKGEV).

Expressed in the tapetum and middle layer of developing anthers. Expressed in trichomes.

The protein resides in the nucleus. In terms of biological role, transcription factor that binds to the DNA sequence 5'-CCAACC-3'. Regulates directly PME5, UND and GLOX1. Essential for tapetum development in anthers and microsporogenesis. Regulates the timing of tapetal programmed cell death (PCD) which is critical for pollen development. May act through the activation of UND, encoding an A1 aspartic protease. Required for anther development by regulating tapetum development, callose dissolution and exine formation. Acts upstream of A6 and FAR2/MS2, two genes required for pollen exine formation. Negatively regulates trichome endoreduplication and trichome branching. The chain is Transcription factor MYB80 from Arabidopsis thaliana (Mouse-ear cress).